Consider the following 392-residue polypeptide: MHKPTPRTESPNALAFITRFFAAESAGGLVLMAAALAALIVANSPLGDSYFAALHAVFAGLSVSHWINDGLMAIFFMLVGLEIKREVLAGQLASWSQRALPGFAALGGMLVPALIYVAFNWGRPDTIGGWAIPAATDIAFALGVLSLLGKRVPLSLKIFLSALAILDDLGAVLIIALFYTSDLSIPMLLAALGSIAMLVALNRLGVKKLLPYLIVGALLWFFMLQSGIHATLAGVALALCIPLGKPDEEARSPLLHLEEKLHPWVAFAVVPIFGFANAGVSLSGITADTLVDPVPLGVALGLLVGKQVGIFAMAALAIRAGLARLPDGSNWGQLYGVAALCGIGFTMSLFIGALAFPGAPELVDEVKVGVLIGSVLSAVLGVVVLRRFAQRG.

Transmembrane regions (helical) follow at residues 20 to 40 (FFAA…AALI), 61 to 81 (LSVS…LVGL), 99 to 119 (ALPG…YVAF), 127 to 147 (IGGW…VLSL), 158 to 178 (IFLS…IALF), 181 to 201 (SDLS…LVAL), 209 to 229 (LLPY…SGIH), 265 to 285 (VAFA…LSGI), 298 to 318 (VALG…ALAI), 336 to 356 (GVAA…ALAF), and 365 to 385 (EVKV…VVVL).

This sequence belongs to the NhaA Na(+)/H(+) (TC 2.A.33) antiporter family.

It localises to the cell inner membrane. The catalysed reaction is Na(+)(in) + 2 H(+)(out) = Na(+)(out) + 2 H(+)(in). Na(+)/H(+) antiporter that extrudes sodium in exchange for external protons. This is Na(+)/H(+) antiporter NhaA 2 from Pseudomonas syringae pv. syringae (strain B728a).